Consider the following 428-residue polypeptide: MGPPPGAGVSCRGGCGFSRLLAWCFLLALSPQAPGSRGAEAVWTAYLNVSWRVPHTGVNRTVWELSEEGVYGQDSPLEPVAGVLVPPDGPGALNACNPHTNFTVPTVWGSTVQVSWLALIQRGGGCTFADKIHLAYERGASGAVIFNFPGTRNEVIPMSHPGAVDIVAIMIGNLKGTKILQSIQRGIQVTMVIEVGKKHGPWVNHYSIFFVSVSFFIITAATVGYFIFYSARRLRNARAQSRKQRQLKADAKKAIGRLQLRTLKQGDKEIGPDGDSCAVCIELYKPNDLVRILTCNHIFHKTCVDPWLLEHRTCPMCKCDILKALGIEVDVEDGSVSLQVPVSNEISNSASSHEEDNRSETASSGYASVQGTDEPPLEEHVQSTNESLQLVNHEANSVAVDVIPHVDNPTFEEDETPNQETAVREIKS.

Residues 1 to 38 form the signal peptide; the sequence is MGPPPGAGVSCRGGCGFSRLLAWCFLLALSPQAPGSRG. 3 N-linked (GlcNAc...) asparagine glycosylation sites follow: Asn48, Asn59, and Asn101. In terms of domain architecture, PA spans 75–183; sequence SPLEPVAGVL…LKGTKILQSI (109 aa). A helical transmembrane segment spans residues 208–228; sequence IFFVSVSFFIITAATVGYFIF. The RING-type; atypical zinc finger occupies 277–318; sequence CAVCIELYKPNDLVRILTCNHIFHKTCVDPWLLEHRTCPMCK. The interval 346-428 is disordered; sequence ISNSASSHEE…QETAVREIKS (83 aa). Residues 360–371 are compositionally biased toward polar residues; sequence ETASSGYASVQG.

Auto-ubiquitinated. Controls the development of T-cell clonal anergy by ubiquitination.

It localises to the cytoplasm. The protein localises to the endomembrane system. Its subcellular location is the cytoskeleton. It is found in the perinuclear region. The catalysed reaction is S-ubiquitinyl-[E2 ubiquitin-conjugating enzyme]-L-cysteine + [acceptor protein]-L-lysine = [E2 ubiquitin-conjugating enzyme]-L-cysteine + N(6)-ubiquitinyl-[acceptor protein]-L-lysine.. It functions in the pathway protein modification; protein ubiquitination. In terms of biological role, E3 ubiquitin-protein ligase that catalyzes 'Lys-27', 'Lys-48'- or 'Lys-63'-linked polyubiquitin chains formation and plays a role in different biological processes such as modulation of immune response, cytoskeletal dynamics or protein homeostasis. Inhibits IL2 and IL4 transcription, thereby playing an important role in the induction of the anergic phenotype, a long-term stable state of T-lymphocyte unresponsiveness to antigenic stimulation associated with the blockade of interleukin production. Ubiquitinates ARPC5 with 'Lys-48' linkages and COR1A with 'Lys-63' linkages leading to their degradation, down-regulation of these cytoskeletal components results in impaired lamellipodium formation and reduced accumulation of F-actin at the immunological synapse. Functions in the patterning of the dorsal ectoderm; sensitizes ectoderm to respond to neural-inducing signals. Plays a positive role in innate immune response by promoting 'Lys-63'-linked ubiquitination of TBK1 after RNA- or DNA-virus infection. Regulates alveolar macrophage activation and neutrophil infiltration by interacting with TLR4, targeting it for degradation, and inhibiting NF-kappa-B activation, hence decreasing pro-inflammatory cytokines. Negatively regulates the IL-3/STAT5 signaling pathway by facilitating 'Lys-27'-linked polyubiquitination of IL3RA leading to its degradation via lysosomal pathway. Directly regulates the N-glycosylation process in the endoplasmic reticulum by targeting the glycosyl-transferase RPN1 for ubiquitination and degradation. Other substrates targeted for degradation by RNF128 include transmembrane proteins CD40L, CD83 or the tetraspanin CD151. The protein is E3 ubiquitin-protein ligase RNF128 (RNF128) of Homo sapiens (Human).